Reading from the N-terminus, the 249-residue chain is 2,3-bisphosphoglycerate-dependent phosphoglycerate mutase (249 aa).

Substrate contacts are provided by residues 9-16 (RHGQSQWN), 22-23 (TG), Arg-61, 88-91 (ERHY), Lys-99, 115-116 (RR), and 184-185 (GN). The active-site Tele-phosphohistidine intermediate is His-10. Glu-88 serves as the catalytic Proton donor/acceptor.

Belongs to the phosphoglycerate mutase family. BPG-dependent PGAM subfamily. As to quaternary structure, homodimer.

The catalysed reaction is (2R)-2-phosphoglycerate = (2R)-3-phosphoglycerate. It participates in carbohydrate degradation; glycolysis; pyruvate from D-glyceraldehyde 3-phosphate: step 3/5. Catalyzes the interconversion of 2-phosphoglycerate and 3-phosphoglycerate. In Xylella fastidiosa (strain M12), this protein is 2,3-bisphosphoglycerate-dependent phosphoglycerate mutase.